We begin with the raw amino-acid sequence, 923 residues long: RNA polymerase-associated protein RapA (923 aa).

The Helicase ATP-binding domain occupies 162–332 (EVGNRVNPRV…FARLRLLDPE (171 aa)). 175-182 (DEVGLGKT) lines the ATP pocket. Residues 278 to 281 (DEAH) carry the DEAH box motif. Positions 443-597 (KIDWLIDFLK…TCPMGMALFS (155 aa)) constitute a Helicase C-terminal domain.

The protein belongs to the SNF2/RAD54 helicase family. RapA subfamily. Interacts with the RNAP. Has a higher affinity for the core RNAP than for the holoenzyme. Its ATPase activity is stimulated by binding to RNAP.

In terms of biological role, transcription regulator that activates transcription by stimulating RNA polymerase (RNAP) recycling in case of stress conditions such as supercoiled DNA or high salt concentrations. Probably acts by releasing the RNAP, when it is trapped or immobilized on tightly supercoiled DNA. Does not activate transcription on linear DNA. Probably not involved in DNA repair. This chain is RNA polymerase-associated protein RapA, found in Haemophilus influenzae (strain ATCC 51907 / DSM 11121 / KW20 / Rd).